The following is a 123-amino-acid chain: Small ribosomal subunit protein uS12 (123 aa).

3-methylthioaspartic acid is present on D89. A disordered region spans residues 101–123; sequence SLDTAGVKDRKQSRSKYGAKRPK. Basic residues predominate over residues 113-123; sequence SRSKYGAKRPK.

It belongs to the universal ribosomal protein uS12 family. In terms of assembly, part of the 30S ribosomal subunit. Contacts proteins S8 and S17. May interact with IF1 in the 30S initiation complex.

Its function is as follows. With S4 and S5 plays an important role in translational accuracy. Interacts with and stabilizes bases of the 16S rRNA that are involved in tRNA selection in the A site and with the mRNA backbone. Located at the interface of the 30S and 50S subunits, it traverses the body of the 30S subunit contacting proteins on the other side and probably holding the rRNA structure together. The combined cluster of proteins S8, S12 and S17 appears to hold together the shoulder and platform of the 30S subunit. This is Small ribosomal subunit protein uS12 from Laribacter hongkongensis (strain HLHK9).